The following is a 21-amino-acid chain: Dahlein-5.2 (21 aa).

Expressed by the skin dorsal glands.

The protein resides in the secreted. Its function is as follows. Has no antimicrobial activity. Strongly inhibits the formation of NO by neuronal nitric oxide synthase at micromolar concentrations. This is Dahlein-5.2 from Ranoidea dahlii (Dahl's aquatic frog).